The sequence spans 339 residues: Sperm acrosome membrane-associated protein 6 (339 aa).

Positions 1 to 41 (MTSQRSLSSPQTRRPSVMGLISLVGSIVLLFLLIFRASTWA) are cleaved as a signal peptide. Residues 42–45 (CLFC) carry the CXXC motif motif. Disulfide bonds link cysteine 42–cysteine 155, cysteine 45–cysteine 158, cysteine 56–cysteine 70, cysteine 140–cysteine 163, cysteine 144–cysteine 169, and cysteine 186–cysteine 241. At 42–310 (CLFCFTTYEE…NPQALTLGNL (269 aa)) the chain is on the extracellular side. The CXXC motif signature appears at 155 to 158 (CSGC). The Ig-like domain maps to 166–251 (PLDCPVQDML…VILHDQRPLA (86 aa)). N-linked (GlcNAc...) asparagine glycosylation occurs at asparagine 258. A helical transmembrane segment spans residues 311–331 (FLLAATAALGSASVTLLVWLF). The Cytoplasmic segment spans residues 332 to 339 (FRWYLSGN).

It belongs to the SPACA6 family. Forms a complex with IZUMO1 and TMEM81 on spermatocyte cell membrane required for fertilization. Highly expressed in testis. Minor expression also detected in epididymis, seminal vesicle and ovary. Predominantly expressed in testicular germ cells during spermiogenesis. Most abundant in round spermatids and detected at lower levels in elongating spermatids.

The protein localises to the cytoplasmic vesicle. The protein resides in the secretory vesicle. It is found in the acrosome membrane. Sperm protein required for fusion of sperm with the egg membrane during fertilization. May regulate the expression of sperm surface protein DCST2. In Mus musculus (Mouse), this protein is Sperm acrosome membrane-associated protein 6.